A 473-amino-acid chain; its full sequence is UDP-N-acetylmuramate--L-alanine ligase (473 aa).

Residue 123–129 (GTHGKTT) participates in ATP binding.

Belongs to the MurCDEF family.

Its subcellular location is the cytoplasm. The catalysed reaction is UDP-N-acetyl-alpha-D-muramate + L-alanine + ATP = UDP-N-acetyl-alpha-D-muramoyl-L-alanine + ADP + phosphate + H(+). It participates in cell wall biogenesis; peptidoglycan biosynthesis. Functionally, cell wall formation. This chain is UDP-N-acetylmuramate--L-alanine ligase, found in Marinomonas sp. (strain MWYL1).